The primary structure comprises 256 residues: ATP synthase peripheral stalk subunit b, mitochondrial (256 aa).

A mitochondrion-targeting transit peptide spans Met-1 to Ala-42. At Lys-131 the chain carries N6-succinyllysine. An N6-acetyllysine mark is found at Lys-139, Lys-154, Lys-162, Lys-221, Lys-233, and Lys-244.

The protein belongs to the eukaryotic ATPase B chain family. In terms of assembly, component of the ATP synthase complex composed at least of ATP5F1A/subunit alpha, ATP5F1B/subunit beta, ATP5MC1/subunit c (homooctomer), MT-ATP6/subunit a, MT-ATP8/subunit 8, ATP5ME/subunit e, ATP5MF/subunit f, ATP5MG/subunit g, ATP5MK/subunit k, ATP5MJ/subunit j, ATP5F1C/subunit gamma, ATP5F1D/subunit delta, ATP5F1E/subunit epsilon, ATP5PF/subunit F6, ATP5PB/subunit b, ATP5PD/subunit d, ATP5PO/subunit OSCP. ATP synthase complex consists of a soluble F(1) head domain (subunits alpha(3) and beta(3)) - the catalytic core - and a membrane F(0) domain - the membrane proton channel (subunits c, a, 8, e, f, g, k and j). These two domains are linked by a central stalk (subunits gamma, delta, and epsilon) rotating inside the F1 region and a stationary peripheral stalk (subunits F6, b, d, and OSCP).

Its subcellular location is the mitochondrion. The protein resides in the mitochondrion inner membrane. Its function is as follows. Subunit b, of the mitochondrial membrane ATP synthase complex (F(1)F(0) ATP synthase or Complex V) that produces ATP from ADP in the presence of a proton gradient across the membrane which is generated by electron transport complexes of the respiratory chain. ATP synthase complex consist of a soluble F(1) head domain - the catalytic core - and a membrane F(1) domain - the membrane proton channel. These two domains are linked by a central stalk rotating inside the F(1) region and a stationary peripheral stalk. During catalysis, ATP synthesis in the catalytic domain of F(1) is coupled via a rotary mechanism of the central stalk subunits to proton translocation. In vivo, can only synthesize ATP although its ATP hydrolase activity can be activated artificially in vitro. Part of the complex F(0) domain. Part of the complex F(0) domain and the peripheric stalk, which acts as a stator to hold the catalytic alpha(3)beta(3) subcomplex and subunit a/ATP6 static relative to the rotary elements. The chain is ATP synthase peripheral stalk subunit b, mitochondrial from Pongo abelii (Sumatran orangutan).